The primary structure comprises 222 residues: Uridine diphosphate glucose pyrophosphatase NUDT14 (222 aa).

Residues 38-206 (KTHDSVTVLL…DIPKTLGVIF (169 aa)) form the Nudix hydrolase domain. The Nudix box signature appears at 111-129 (PGLSLEEVACKEAWEECGY).

This sequence belongs to the Nudix hydrolase family. Homodimer. Mg(2+) is required as a cofactor.

It localises to the cytoplasm. It carries out the reaction UDP-sugar + H2O = UMP + alpha-D-aldose 1-phosphate.. Functionally, hydrolyzes UDP-glucose to glucose 1-phosphate and UMP and ADP-ribose to ribose 5-phosphate and AMP. The physiological substrate is probably UDP-glucose. Poor activity on other substrates such as ADP-glucose, CDP-glucose, GDP-glucose and GDP-mannose. The protein is Uridine diphosphate glucose pyrophosphatase NUDT14 (NUDT14) of Homo sapiens (Human).